The chain runs to 648 residues: Biosynthetic arginine decarboxylase (648 aa).

The residue at position 109 (Lys109) is an N6-(pyridoxal phosphate)lysine. A substrate-binding site is contributed by 291–301 (IDVGGGLGIDF).

This sequence belongs to the Orn/Lys/Arg decarboxylase class-II family. SpeA subfamily. Mg(2+) is required as a cofactor. It depends on pyridoxal 5'-phosphate as a cofactor.

The enzyme catalyses L-arginine + H(+) = agmatine + CO2. It participates in amine and polyamine biosynthesis; agmatine biosynthesis; agmatine from L-arginine: step 1/1. Functionally, catalyzes the biosynthesis of agmatine from arginine. The sequence is that of Biosynthetic arginine decarboxylase from Prochlorococcus marinus (strain MIT 9301).